The following is an 88-amino-acid chain: Small ribosomal subunit protein bS20 (88 aa).

Over residues 1–11 (MANIKSSEKDI) the composition is skewed to basic and acidic residues. Disordered regions lie at residues 1–31 (MANI…LRTQ) and 69–88 (SKNA…SSAA).

This sequence belongs to the bacterial ribosomal protein bS20 family.

Its function is as follows. Binds directly to 16S ribosomal RNA. This is Small ribosomal subunit protein bS20 from Leptospira interrogans serogroup Icterohaemorrhagiae serovar copenhageni (strain Fiocruz L1-130).